The primary structure comprises 115 residues: Divalent-cation tolerance protein CutA (115 aa).

Cu cation-binding residues include C19, H86, and H87.

Belongs to the CutA family. As to quaternary structure, homotrimer. It depends on Cu cation as a cofactor.

Its subcellular location is the cytoplasm. In terms of biological role, involved in resistance toward heavy metals. The polypeptide is Divalent-cation tolerance protein CutA (Citrobacter koseri (strain ATCC BAA-895 / CDC 4225-83 / SGSC4696)).